We begin with the raw amino-acid sequence, 158 residues long: Phospholipase A2 AP-PLA2-II (158 aa).

The signal sequence occupies residues 1–16; the sequence is MKTFLILAMAVALAKA. A propeptide spanning residues 17 to 23 is cleaved from the precursor; the sequence is QSTDEIT. Cystine bridges form between cysteine 51–cysteine 158, cysteine 53–cysteine 69, cysteine 68–cysteine 138, cysteine 75–cysteine 131, cysteine 85–cysteine 124, and cysteine 109–cysteine 129. Glycine 54 and glycine 56 together coordinate Ca(2+). The active site involves histidine 72. Aspartate 73 serves as a coordination point for Ca(2+). Aspartate 132 is an active-site residue.

Belongs to the phospholipase A2 family. Group I subfamily. Monomer. The cofactor is Ca(2+). In terms of tissue distribution, expressed by the venom gland.

The protein localises to the secreted. The catalysed reaction is a 1,2-diacyl-sn-glycero-3-phosphocholine + H2O = a 1-acyl-sn-glycero-3-phosphocholine + a fatty acid + H(+). Starfish phospholipase A2 (PLA2) that has hemorrhagic and capillary permeability-increasing activities and hence is considered to be deeply involved in the local inflammation. Shows hemolytic activity only in the presence of phosphatidylcholine (PC). PLA2 catalyzes the calcium-dependent hydrolysis of the 2-acyl groups in 3-sn-phosphoglycerides. This chain is Phospholipase A2 AP-PLA2-II, found in Acanthaster planci (Crown-of-thorns starfish).